A 97-amino-acid polypeptide reads, in one-letter code: Secreted Ly-6/uPAR domain-containing protein 2 (97 aa).

A signal peptide spans 1-22 (MQFHTGLLLAAVLSLQLAAAQA). One can recognise a UPAR/Ly6 domain in the interval 23–95 (LWCHQCTGFG…IACCQTSLCN (73 aa)). 5 cysteine pairs are disulfide-bonded: Cys25-Cys47, Cys28-Cys34, Cys40-Cys68, Cys72-Cys88, and Cys89-Cys94.

As to quaternary structure, interacts with CHRNA3, CHRNA4, CHRNA5, CHRNA7, CHRNB2 and CHRNB4. Interacts with CHRM1 and CHRM3 probably in an allosteric manner.

Its subcellular location is the secreted. Binds and may modulate the functional properties of nicotinic and muscarinic acetylcholine receptors. May regulate keratinocytes proliferation, differentiation and apoptosis. In vitro moderately inhibits ACh-evoked currents of alpha-3:beta-2-containing nAChRs, strongly these of alpha-4:beta-2-containing nAChRs, modulates alpha-7-containing nAChRs, and inhibits nicotine-induced signaling probably implicating alpha-3:beta-4-containing nAChRs. Proposed to act on alpha-3:beta-2 and alpha-7 nAChRs in an orthosteric, and on mAChRs, such as CHRM1 and CHRM3, in an allosteric manner. In Macaca mulatta (Rhesus macaque), this protein is Secreted Ly-6/uPAR domain-containing protein 2.